We begin with the raw amino-acid sequence, 109 residues long: Nucleoid-associated protein APL_0075 (109 aa).

Positions Met1–Met21 are disordered. Residues Leu10–Glu19 are compositionally biased toward low complexity.

This sequence belongs to the YbaB/EbfC family. Homodimer.

It localises to the cytoplasm. It is found in the nucleoid. Functionally, binds to DNA and alters its conformation. May be involved in regulation of gene expression, nucleoid organization and DNA protection. In Actinobacillus pleuropneumoniae serotype 5b (strain L20), this protein is Nucleoid-associated protein APL_0075.